The following is a 319-amino-acid chain: tRNA-cytidine(32) 2-sulfurtransferase (319 aa).

The PP-loop motif motif lies at serine 43–serine 48. Residues cysteine 118, cysteine 121, and cysteine 209 each coordinate [4Fe-4S] cluster.

Belongs to the TtcA family. Homodimer. The cofactor is Mg(2+). [4Fe-4S] cluster serves as cofactor.

It is found in the cytoplasm. The catalysed reaction is cytidine(32) in tRNA + S-sulfanyl-L-cysteinyl-[cysteine desulfurase] + AH2 + ATP = 2-thiocytidine(32) in tRNA + L-cysteinyl-[cysteine desulfurase] + A + AMP + diphosphate + H(+). The protein operates within tRNA modification. Functionally, catalyzes the ATP-dependent 2-thiolation of cytidine in position 32 of tRNA, to form 2-thiocytidine (s(2)C32). The sulfur atoms are provided by the cysteine/cysteine desulfurase (IscS) system. The sequence is that of tRNA-cytidine(32) 2-sulfurtransferase from Neisseria gonorrhoeae (strain NCCP11945).